Consider the following 99-residue polypeptide: NADH-quinone oxidoreductase subunit K (99 aa).

The next 3 helical transmembrane spans lie at Val3 to Ile23, Ile28 to Phe48, and Ile59 to Ile79.

Belongs to the complex I subunit 4L family. NDH-1 is composed of 14 different subunits. Subunits NuoA, H, J, K, L, M, N constitute the membrane sector of the complex.

It localises to the cell membrane. The catalysed reaction is a quinone + NADH + 5 H(+)(in) = a quinol + NAD(+) + 4 H(+)(out). Its function is as follows. NDH-1 shuttles electrons from NADH, via FMN and iron-sulfur (Fe-S) centers, to quinones in the respiratory chain. The immediate electron acceptor for the enzyme in this species is believed to be a menaquinone. Couples the redox reaction to proton translocation (for every two electrons transferred, four hydrogen ions are translocated across the cytoplasmic membrane), and thus conserves the redox energy in a proton gradient. This is NADH-quinone oxidoreductase subunit K from Nocardioides sp. (strain ATCC BAA-499 / JS614).